Reading from the N-terminus, the 255-residue chain is Tritrans,polycis-undecaprenyl-diphosphate synthase (geranylgeranyl-diphosphate specific) (255 aa).

Asp-34 is an active-site residue. Asp-34 contributes to the Mg(2+) binding site. Residues 35 to 38 (GNRR), His-51, and 79 to 81 (STE) each bind substrate. Asn-82 functions as the Proton acceptor in the catalytic mechanism. Substrate-binding positions include Phe-83, Arg-85, Arg-204, and 210 to 212 (RIS). Glu-223 provides a ligand contact to Mg(2+).

This sequence belongs to the UPP synthase family. As to quaternary structure, homodimer. Requires Mg(2+) as cofactor.

The enzyme catalyses geranylgeranyl diphosphate + 7 isopentenyl diphosphate = tri-trans,hepta-cis-undecaprenyl diphosphate + 7 diphosphate. Catalyzes the sequential condensation of isopentenyl diphosphate (IPP) with geranylgeranyl diphosphate (GGPP) to yield (2Z,6Z,10Z,14Z,18Z,22Z,26Z,30E,34E,38E)-undecaprenyl diphosphate (tritrans,heptacis-UPP). It is probably the precursor of glycosyl carrier lipids. The polypeptide is Tritrans,polycis-undecaprenyl-diphosphate synthase (geranylgeranyl-diphosphate specific) (Picrophilus torridus (strain ATCC 700027 / DSM 9790 / JCM 10055 / NBRC 100828 / KAW 2/3)).